We begin with the raw amino-acid sequence, 282 residues long: Bifunctional protein FolD (282 aa).

NADP(+) is bound by residues 166–168 and S191; that span reads GRS.

This sequence belongs to the tetrahydrofolate dehydrogenase/cyclohydrolase family. As to quaternary structure, homodimer.

The enzyme catalyses (6R)-5,10-methylene-5,6,7,8-tetrahydrofolate + NADP(+) = (6R)-5,10-methenyltetrahydrofolate + NADPH. The catalysed reaction is (6R)-5,10-methenyltetrahydrofolate + H2O = (6R)-10-formyltetrahydrofolate + H(+). The protein operates within one-carbon metabolism; tetrahydrofolate interconversion. Its function is as follows. Catalyzes the oxidation of 5,10-methylenetetrahydrofolate to 5,10-methenyltetrahydrofolate and then the hydrolysis of 5,10-methenyltetrahydrofolate to 10-formyltetrahydrofolate. This Acidovorax sp. (strain JS42) protein is Bifunctional protein FolD.